We begin with the raw amino-acid sequence, 1091 residues long: Isoleucine--tRNA ligase (1091 aa).

Positions 48 to 58 match the 'HIGH' region motif; the sequence is PFATGLPHFGH. The 'KMSKS' region signature appears at 625-629; sequence KMSKA. Lys628 is a binding site for ATP.

The protein belongs to the class-I aminoacyl-tRNA synthetase family. IleS type 2 subfamily. As to quaternary structure, monomer. The cofactor is Zn(2+).

It localises to the cytoplasm. The enzyme catalyses tRNA(Ile) + L-isoleucine + ATP = L-isoleucyl-tRNA(Ile) + AMP + diphosphate. Its function is as follows. Catalyzes the attachment of isoleucine to tRNA(Ile). As IleRS can inadvertently accommodate and process structurally similar amino acids such as valine, to avoid such errors it has two additional distinct tRNA(Ile)-dependent editing activities. One activity is designated as 'pretransfer' editing and involves the hydrolysis of activated Val-AMP. The other activity is designated 'posttransfer' editing and involves deacylation of mischarged Val-tRNA(Ile). The protein is Isoleucine--tRNA ligase of Treponema pallidum (strain Nichols).